The chain runs to 339 residues: tRNA N6-adenosine threonylcarbamoyltransferase (339 aa).

Fe cation is bound by residues His111 and His115. Substrate-binding positions include 134 to 138 (LVSGG), Asp167, Gly180, and Asn270. Position 298 (Asp298) interacts with Fe cation.

Belongs to the KAE1 / TsaD family. Fe(2+) is required as a cofactor.

The protein resides in the cytoplasm. It carries out the reaction L-threonylcarbamoyladenylate + adenosine(37) in tRNA = N(6)-L-threonylcarbamoyladenosine(37) in tRNA + AMP + H(+). Its function is as follows. Required for the formation of a threonylcarbamoyl group on adenosine at position 37 (t(6)A37) in tRNAs that read codons beginning with adenine. Is involved in the transfer of the threonylcarbamoyl moiety of threonylcarbamoyl-AMP (TC-AMP) to the N6 group of A37, together with TsaE and TsaB. TsaD likely plays a direct catalytic role in this reaction. The protein is tRNA N6-adenosine threonylcarbamoyltransferase of Alkalilimnicola ehrlichii (strain ATCC BAA-1101 / DSM 17681 / MLHE-1).